Reading from the N-terminus, the 460-residue chain is ATP synthase subunit beta (460 aa).

Residue 149–156 (GGAGVGKT) participates in ATP binding.

This sequence belongs to the ATPase alpha/beta chains family. F-type ATPases have 2 components, CF(1) - the catalytic core - and CF(0) - the membrane proton channel. CF(1) has five subunits: alpha(3), beta(3), gamma(1), delta(1), epsilon(1). CF(0) has three main subunits: a(1), b(2) and c(9-12). The alpha and beta chains form an alternating ring which encloses part of the gamma chain. CF(1) is attached to CF(0) by a central stalk formed by the gamma and epsilon chains, while a peripheral stalk is formed by the delta and b chains.

Its subcellular location is the cell inner membrane. It carries out the reaction ATP + H2O + 4 H(+)(in) = ADP + phosphate + 5 H(+)(out). Functionally, produces ATP from ADP in the presence of a proton gradient across the membrane. The catalytic sites are hosted primarily by the beta subunits. In Nitrosomonas europaea (strain ATCC 19718 / CIP 103999 / KCTC 2705 / NBRC 14298), this protein is ATP synthase subunit beta.